We begin with the raw amino-acid sequence, 314 residues long: Olfactory receptor 52K1 (314 aa).

The Extracellular segment spans residues 1–27 (MLPSNITSTHPAVFLLVGIPGLEHLHA). Asparagine 5 carries an N-linked (GlcNAc...) asparagine glycan. A helical membrane pass occupies residues 28 to 48 (WISIPFCFAYTLALLGNCTLL). At 49 to 56 (FIIQADAA) the chain is on the cytoplasmic side. The chain crosses the membrane as a helical span at residues 57–77 (LHEPMYLFLAMLATIDLVLSS). The Extracellular segment spans residues 78–101 (TTLPKMLAIFWFRDQEINFFACLV). A disulfide bond links cysteine 99 and cysteine 191. Residues 102–122 (QMFFLHSFSIMESAVLLAMAF) form a helical membrane-spanning segment. Over 123–141 (DRYVAICKPLHYTTVLTGS) the chain is Cytoplasmic. Residues 142 to 162 (LITKIGMAAVARAVTLMTPLP) form a helical membrane-spanning segment. Over 163 to 198 (FLLRRFHYCRGPVIAHCYCEHMAVVRLACGDTSFNN) the chain is Extracellular. The helical transmembrane segment at 199 to 219 (IYGIAVAMFIVVLDLLFVILS) threads the bilayer. The Cytoplasmic portion of the chain corresponds to 220–239 (YVFILQAVLQLASQEARYKA). Residues 240-260 (FGTCVSHIGAILSTYTPVVIS) form a helical membrane-spanning segment. Topologically, residues 261–275 (SVMHRVARHAAPRVH) are extracellular. Residues 276 to 296 (ILLAIFYLLFPPMVNPIIYGV) traverse the membrane as a helical segment. Residues 297 to 314 (KTKQIREYVLSLFQRKNM) are Cytoplasmic-facing.

It belongs to the G-protein coupled receptor 1 family.

It localises to the cell membrane. Its function is as follows. Odorant receptor. The sequence is that of Olfactory receptor 52K1 (OR52K1) from Homo sapiens (Human).